The sequence spans 224 residues: Flagellar L-ring protein (224 aa).

A signal peptide spans 1 to 15 (MLRYLMVGSLLVLAG). Cys-16 is lipidated: N-palmitoyl cysteine. Cys-16 carries S-diacylglycerol cysteine lipidation.

Belongs to the FlgH family. As to quaternary structure, the basal body constitutes a major portion of the flagellar organelle and consists of four rings (L,P,S, and M) mounted on a central rod.

It is found in the cell outer membrane. The protein resides in the bacterial flagellum basal body. Assembles around the rod to form the L-ring and probably protects the motor/basal body from shearing forces during rotation. The sequence is that of Flagellar L-ring protein from Shewanella amazonensis (strain ATCC BAA-1098 / SB2B).